The primary structure comprises 549 residues: DNA polymerase lambda (549 aa).

One can recognise a BRCT domain in the interval 17–116; that stretch reads DPDGMFRGVS…ERLPEHKFAI (100 aa). The disordered stretch occupies residues 126–197; that stretch reads KEGGAAGSGV…ASGDSKETIA (72 aa). Residues 149–175 show a composition bias toward basic and acidic residues; sequence PENRKETAGGNRESRDAIAHPNEDSDV. The span at 180-197 shows a compositional bias: polar residues; it reads STCTSSQSASGDSKETIA. Residues 233-247 form a DNA-binding region; it reads NIYRALGDDRRSFSY. His280 is an active-site residue. The interval 315-318 is DNA-binding; the sequence is GPAT. DCTP is bound by residues Arg356, 387-390, and 396-399; these read SYRR and GDMD. An involved in primer binding region spans residues 390–399; it reads RGKSSCGDMD. Residues Asp397, Asp399, and Asp464 each contribute to the Mn(2+) site. Residues 438–479 form a DNA-binding region; the sequence is IEGTDCGVDTYFGLCTYPGRELRHRIDLKVYPRNRHAFGLLA. Asn487 provides a ligand contact to dCTP.

It belongs to the DNA polymerase type-X family. As to quaternary structure, interacts with PCNA. The cofactor is Mn(2+). In terms of tissue distribution, expressed in proliferating tissues. Expressed in roots, root apex, young leaves, shoot apical meristem (SAM), flag leaves and panicles.

It localises to the nucleus. The catalysed reaction is DNA(n) + a 2'-deoxyribonucleoside 5'-triphosphate = DNA(n+1) + diphosphate. Functionally, repair polymerase involved in base excision repair (BER) and responsible for repair of lesions that give rise to abasic (AP) sites in DNA. Has both DNA polymerase and terminal transferase activities. Has a 5'-deoxyribose-5-phosphate lyase (dRP lyase) activity. This is DNA polymerase lambda from Oryza sativa subsp. japonica (Rice).